Consider the following 102-residue polypeptide: PqqA binding protein (102 aa).

Belongs to the PqqD family. Monomer. Interacts with PqqE.

It participates in cofactor biosynthesis; pyrroloquinoline quinone biosynthesis. Functionally, functions as a PqqA binding protein and presents PqqA to PqqE, in the pyrroloquinoline quinone (PQQ) biosynthetic pathway. The chain is PqqA binding protein from Rhodopseudomonas palustris (strain ATCC BAA-98 / CGA009).